The following is a 485-amino-acid chain: MKYRKRGWPSCWWPRAAVLPMRRQGVGGAEKIVRIADISGFTGALGKTAEAIETTPAGVEKIVLVGVGEPGKLGNDDWLKIGGAAFSQIGNAERVTLTLALPETTIAGDEAADVALGMVLRSYKFDRYKTRKSEENGEPKHAAKITVCVADTHSARKAFEVAEAVADGVIQARNLVNEPANILGPVEFAEEAEKLEKLGVKVEVLGEKELKKLGMGALLGVAQGSVRPPRLVVMEWHGAKGKEKPIAFVGKGVVFDTGGISIKPAANMEDMKGDMGGAAAVTGLMRALAGRKAKVNAIGVIGLVENMPDGNAQRPGDIVTSMSGQTIEVINTDAEGRLVLADALHYTNDRFKPRFIINLATLTGAVMVALGQYHAGLFSNDDELADQLYDAGQSTGEKLWRLPLGTEYDKMIDSKFADMKNSAGRYGGSITAAQFLKRFVGETPWAHLDVAGTAMGSPANEYNQSWASGFGVRLLDRLVRDQFES.

Residues lysine 251 and aspartate 256 each contribute to the Mn(2+) site. The active site involves lysine 263. The Mn(2+) site is built by aspartate 274, aspartate 333, and glutamate 335. Arginine 337 is an active-site residue.

This sequence belongs to the peptidase M17 family. Requires Mn(2+) as cofactor.

The protein resides in the cytoplasm. The enzyme catalyses Release of an N-terminal amino acid, Xaa-|-Yaa-, in which Xaa is preferably Leu, but may be other amino acids including Pro although not Arg or Lys, and Yaa may be Pro. Amino acid amides and methyl esters are also readily hydrolyzed, but rates on arylamides are exceedingly low.. The catalysed reaction is Release of an N-terminal amino acid, preferentially leucine, but not glutamic or aspartic acids.. In terms of biological role, presumably involved in the processing and regular turnover of intracellular proteins. Catalyzes the removal of unsubstituted N-terminal amino acids from various peptides. This is Probable cytosol aminopeptidase from Brucella melitensis biotype 1 (strain ATCC 23456 / CCUG 17765 / NCTC 10094 / 16M).